A 482-amino-acid polypeptide reads, in one-letter code: Falcipain-2b (482 aa).

Residues 1–35 lie on the Cytoplasmic side of the membrane; sequence MDYHMDYIPNEVISHQGERFVDKYVDRKILKNKKS. Positions 1-241 are cleaved as a propeptide — activation peptide; that stretch reads MDYHMDYIPN…PLKNSKYLLD (241 aa). A Bipartite vacuolar targeting signal 1 motif is present at residues 16 to 25; sequence QGERFVDKYV. The helical; Signal-anchor for type II membrane protein transmembrane segment at 36 to 56 threads the bilayer; it reads LLVIISLSVLSVVGFILFYFT. The Lumenal segment spans residues 57-482; that stretch reads PNFRKSDLFK…GTDAFIPLIE (426 aa). N-linked (GlcNAc...) asparagine glycosylation is present at Asn67. The Bipartite vacuolar targeting signal 2 motif lies at 84-105; the sequence is KSPNGKKFIVSKIDEALSFYDN. N-linked (GlcNAc...) asparagine glycosylation occurs at Asn117. The Nose motif; required for the correct folding of the mature form signature appears at 242-258; it reads QINYDAVIKKYKGNENF. Cystine bridges form between Cys280-Cys321, Cys314-Cys355, Cys340-Cys360, and Cys409-Cys470. Cys283 is an active-site residue. His415 is a catalytic residue. An Arm motif; binds to host hemoglobin and required for the inhibitory interaction between the propeptide and the catalytic domain motif is present at residues 426 to 435; it reads EIVNPLTKKG.

This sequence belongs to the peptidase C1 family. As to quaternary structure, component of the hemozoin formation complex (HFC) composed of falcipains FP2A and/or FP2B, plasmepsins PMII, PMIII/HAP and PMIV, heme detoxifying protein HDP and falcilysin FLN. The HFC complex is involved in hemoglobin degradation and detoxification of heme in the food vacuole during the asexual blood stage.

It localises to the vacuole. The protein localises to the membrane. Cysteine protease which cleaves native host hemoglobin in the food vacuole during the asexual blood stage. Preferentially cleaves substrates which have a leucine at the P2 position. This Plasmodium falciparum (isolate 3D7) protein is Falcipain-2b.